Here is a 135-residue protein sequence, read N- to C-terminus: Large-conductance mechanosensitive channel (135 aa).

2 consecutive transmembrane segments (helical) span residues 10-30 (FAMR…GAFG) and 76-96 (GSFI…FCVI).

It belongs to the MscL family. As to quaternary structure, homopentamer.

The protein localises to the cell inner membrane. Channel that opens in response to stretch forces in the membrane lipid bilayer. May participate in the regulation of osmotic pressure changes within the cell. This Campylobacter concisus (strain 13826) protein is Large-conductance mechanosensitive channel.